Consider the following 245-residue polypeptide: 1-(5-phosphoribosyl)-5-[(5-phosphoribosylamino)methylideneamino] imidazole-4-carboxamide isomerase (245 aa).

The active-site Proton acceptor is aspartate 7. Aspartate 129 acts as the Proton donor in catalysis.

It belongs to the HisA/HisF family.

The protein resides in the cytoplasm. The enzyme catalyses 1-(5-phospho-beta-D-ribosyl)-5-[(5-phospho-beta-D-ribosylamino)methylideneamino]imidazole-4-carboxamide = 5-[(5-phospho-1-deoxy-D-ribulos-1-ylimino)methylamino]-1-(5-phospho-beta-D-ribosyl)imidazole-4-carboxamide. The protein operates within amino-acid biosynthesis; L-histidine biosynthesis; L-histidine from 5-phospho-alpha-D-ribose 1-diphosphate: step 4/9. The polypeptide is 1-(5-phosphoribosyl)-5-[(5-phosphoribosylamino)methylideneamino] imidazole-4-carboxamide isomerase (Aliivibrio salmonicida (strain LFI1238) (Vibrio salmonicida (strain LFI1238))).